We begin with the raw amino-acid sequence, 160 residues long: Phosphopantetheine adenylyltransferase (160 aa).

T10 serves as a coordination point for substrate. ATP-binding positions include 10 to 11 (TF) and H18. Residues K42, L74, and R88 each contribute to the substrate site. ATP-binding positions include 89–91 (GLR), E99, and 124–130 (NSFISST).

The protein belongs to the bacterial CoaD family. In terms of assembly, homohexamer. Mg(2+) serves as cofactor.

Its subcellular location is the cytoplasm. It carries out the reaction (R)-4'-phosphopantetheine + ATP + H(+) = 3'-dephospho-CoA + diphosphate. It participates in cofactor biosynthesis; coenzyme A biosynthesis; CoA from (R)-pantothenate: step 4/5. Reversibly transfers an adenylyl group from ATP to 4'-phosphopantetheine, yielding dephospho-CoA (dPCoA) and pyrophosphate. The protein is Phosphopantetheine adenylyltransferase of Photobacterium damsela subsp. piscicida (Pasteurella piscicida).